A 217-amino-acid chain; its full sequence is Oxygen-evolving enhancer protein 3, chloroplastic (217 aa).

2 disordered regions span residues 1 to 25 and 73 to 95; these read MAQA…RRAG and PIKL…SDQA. The transit peptide at 1–63 directs the protein to the chloroplast; it reads MAQAMASMTG…ATGIAGGALA (63 aa).

This sequence belongs to the PsbQ family.

It localises to the plastid. The protein resides in the chloroplast thylakoid membrane. This chain is Oxygen-evolving enhancer protein 3, chloroplastic, found in Oryza sativa subsp. indica (Rice).